A 286-amino-acid chain; its full sequence is Polyamine aminopropyltransferase (286 aa).

The PABS domain maps to 5–238 (PLWHETLHDH…GIMTFAWASD (234 aa)). Q33 contacts S-methyl-5'-thioadenosine. Spermidine contacts are provided by H64 and D88. Residues E108 and 140-141 (DG) each bind S-methyl-5'-thioadenosine. Residue D158 is the Proton acceptor of the active site. A spermidine-binding site is contributed by 158-161 (DCTD). P165 provides a ligand contact to S-methyl-5'-thioadenosine.

Belongs to the spermidine/spermine synthase family. In terms of assembly, homodimer or homotetramer.

The protein resides in the cytoplasm. It carries out the reaction S-adenosyl 3-(methylsulfanyl)propylamine + putrescine = S-methyl-5'-thioadenosine + spermidine + H(+). The protein operates within amine and polyamine biosynthesis; spermidine biosynthesis; spermidine from putrescine: step 1/1. In terms of biological role, catalyzes the irreversible transfer of a propylamine group from the amino donor S-adenosylmethioninamine (decarboxy-AdoMet) to putrescine (1,4-diaminobutane) to yield spermidine. In Klebsiella pneumoniae subsp. pneumoniae (strain ATCC 700721 / MGH 78578), this protein is Polyamine aminopropyltransferase.